The chain runs to 279 residues: 4-hydroxy-3-methylbut-2-enyl diphosphate reductase (279 aa).

Residue Cys12 participates in [4Fe-4S] cluster binding. The (2E)-4-hydroxy-3-methylbut-2-enyl diphosphate site is built by His36 and His70. Residues His36 and His70 each contribute to the dimethylallyl diphosphate site. 2 residues coordinate isopentenyl diphosphate: His36 and His70. [4Fe-4S] cluster is bound at residue Cys92. Residue His120 coordinates (2E)-4-hydroxy-3-methylbut-2-enyl diphosphate. His120 is a binding site for dimethylallyl diphosphate. His120 contacts isopentenyl diphosphate. Residue Glu122 is the Proton donor of the active site. A (2E)-4-hydroxy-3-methylbut-2-enyl diphosphate-binding site is contributed by Thr158. [4Fe-4S] cluster is bound at residue Cys186. (2E)-4-hydroxy-3-methylbut-2-enyl diphosphate is bound by residues Ser214, Ser215, Asn216, and Ser258. Dimethylallyl diphosphate-binding residues include Ser214, Ser215, Asn216, and Ser258. 4 residues coordinate isopentenyl diphosphate: Ser214, Ser215, Asn216, and Ser258.

The protein belongs to the IspH family. The cofactor is [4Fe-4S] cluster.

It catalyses the reaction isopentenyl diphosphate + 2 oxidized [2Fe-2S]-[ferredoxin] + H2O = (2E)-4-hydroxy-3-methylbut-2-enyl diphosphate + 2 reduced [2Fe-2S]-[ferredoxin] + 2 H(+). The catalysed reaction is dimethylallyl diphosphate + 2 oxidized [2Fe-2S]-[ferredoxin] + H2O = (2E)-4-hydroxy-3-methylbut-2-enyl diphosphate + 2 reduced [2Fe-2S]-[ferredoxin] + 2 H(+). It functions in the pathway isoprenoid biosynthesis; dimethylallyl diphosphate biosynthesis; dimethylallyl diphosphate from (2E)-4-hydroxy-3-methylbutenyl diphosphate: step 1/1. It participates in isoprenoid biosynthesis; isopentenyl diphosphate biosynthesis via DXP pathway; isopentenyl diphosphate from 1-deoxy-D-xylulose 5-phosphate: step 6/6. Catalyzes the conversion of 1-hydroxy-2-methyl-2-(E)-butenyl 4-diphosphate (HMBPP) into a mixture of isopentenyl diphosphate (IPP) and dimethylallyl diphosphate (DMAPP). Acts in the terminal step of the DOXP/MEP pathway for isoprenoid precursor biosynthesis. This is 4-hydroxy-3-methylbut-2-enyl diphosphate reductase from Campylobacter fetus subsp. fetus (strain 82-40).